Reading from the N-terminus, the 147-residue chain is Hemoglobin subunit epsilon (147 aa).

One can recognise a Globin domain in the interval 3 to 147 (HFTAEEKSVI…VATALAHKYH (145 aa)). At S51 the chain carries Phosphoserine. The heme b site is built by H64 and H93.

This sequence belongs to the globin family. Red blood cells.

Hemoglobin epsilon chain is a beta-type chain found in early embryos. This is Hemoglobin subunit epsilon (HBE1) from Sus scrofa (Pig).